A 158-amino-acid polypeptide reads, in one-letter code: Rhombotin-2 (158 aa).

LIM zinc-binding domains follow at residues 28–90 (LTCG…LFGQ) and 92–154 (GLCA…WTKL).

In terms of tissue distribution, expression becomes restricted to the ventral blood island (VBI) as the embryo develops. In late neurula and early tailbud embryos, also expressed in the dorsal lateral plate (DLP), the site of definitive hematopoiesis in the tadpole. Expression in the DLP diminishes during tailbud stages. Expressed in circulating blood cells of tadpoles. Also expressed in non-hematopoietic sites, including the tailbud region and the central nervous system of early neurula embryos.

The protein resides in the nucleus. Transcription factor that acts synergistically with tal1/scl and gata1 to specify embryonic dorsal mesoderm to a hematopoietic fate. Induces globin gene expression together with fgf. The protein is Rhombotin-2 of Xenopus laevis (African clawed frog).